A 734-amino-acid polypeptide reads, in one-letter code: Polyphosphate kinase (734 aa).

Asn-67 provides a ligand contact to ATP. 2 residues coordinate Mg(2+): Arg-392 and Arg-422. The region spanning 447-481 is the PLD phosphodiesterase domain; the sequence is THLKTHSKIALVVKRINNELTSFVHLGTGNYNDKT. Catalysis depends on His-452, which acts as the Phosphohistidine intermediate. Residues Tyr-485, Arg-581, and His-609 each contribute to the ATP site. Residues 705–734 form a disordered region; that stretch reads KKQSVQPSGQPVHSRRGGSWMRKLKNTFKR.

Belongs to the polyphosphate kinase 1 (PPK1) family. It depends on Mg(2+) as a cofactor. In terms of processing, an intermediate of this reaction is the autophosphorylated ppk in which a phosphate is covalently linked to a histidine residue through a N-P bond.

It carries out the reaction [phosphate](n) + ATP = [phosphate](n+1) + ADP. Catalyzes the reversible transfer of the terminal phosphate of ATP to form a long-chain polyphosphate (polyP). The chain is Polyphosphate kinase from Staphylococcus epidermidis (strain ATCC 12228 / FDA PCI 1200).